A 372-amino-acid polypeptide reads, in one-letter code: N-methyl-L-tryptophan oxidase (372 aa).

4–34 provides a ligand contact to FAD; sequence DLIIIGSGSVGAAAGYYATRAGLNVLMTDAH. The residue at position 308 (Cys-308) is an S-8alpha-FAD cysteine.

This sequence belongs to the MSOX/MTOX family. MTOX subfamily. Monomer. FAD is required as a cofactor.

It catalyses the reaction N(alpha)-methyl-L-tryptophan + O2 + H2O = L-tryptophan + formaldehyde + H2O2. Catalyzes the oxidative demethylation of N-methyl-L-tryptophan. This is N-methyl-L-tryptophan oxidase from Shigella sonnei (strain Ss046).